Here is a 217-residue protein sequence, read N- to C-terminus: Probable transaldolase (217 aa).

The Schiff-base intermediate with substrate role is filled by Lys-83.

The protein belongs to the transaldolase family. Type 3B subfamily.

Its subcellular location is the cytoplasm. It catalyses the reaction D-sedoheptulose 7-phosphate + D-glyceraldehyde 3-phosphate = D-erythrose 4-phosphate + beta-D-fructose 6-phosphate. It participates in carbohydrate degradation; pentose phosphate pathway; D-glyceraldehyde 3-phosphate and beta-D-fructose 6-phosphate from D-ribose 5-phosphate and D-xylulose 5-phosphate (non-oxidative stage): step 2/3. In terms of biological role, transaldolase is important for the balance of metabolites in the pentose-phosphate pathway. This Pseudothermotoga lettingae (strain ATCC BAA-301 / DSM 14385 / NBRC 107922 / TMO) (Thermotoga lettingae) protein is Probable transaldolase.